The chain runs to 321 residues: Chitinase-like protein 1 (321 aa).

The signal sequence occupies residues 1 to 26 (MVTIRSGSIVILVLLAVSFLALVANG). A disulfide bond links Cys42 and Cys55. N-linked (GlcNAc...) asparagine glycosylation occurs at Asn57. A disulfide bond links Cys157 and Cys167. N-linked (GlcNAc...) asparagine glycosylation is found at Asn208 and Asn244. Cysteines 267 and 304 form a disulfide. Residues 297–321 (GPNDELSCAEQKPFNPSTVPSSSSS) form a disordered region. Polar residues predominate over residues 310-321 (FNPSTVPSSSSS).

It belongs to the glycosyl hydrolase 19 family. Mostly expressed in seedlings shoots and roots, stems, and flowers, and, to a lower extent, in flowers, mature leaves and roots.

It localises to the secreted. No chitinase activity. Essential for normal plant growth and development. Regulates cell expansion extent and differentiation at least in roots and hypocotyls. Prevents lignin accumulation in the pith. May modulate ethylene-mediated regulation during development. Probably required to establish thermotolerance acclimation. Plays a role for controlled anisotropic cell expansion in the regulation of waving during root gravitropism and thigmotropism. Involved in the root system architecture adaptation to multiple environmental conditions such as nitrate. Contributes to salt tolerance and possibly to drought by preventing the overaccumulation of sodium ions. The polypeptide is Chitinase-like protein 1 (CTL1) (Arabidopsis thaliana (Mouse-ear cress)).